Reading from the N-terminus, the 614-residue chain is Threonine--tRNA ligase (614 aa).

Residues 1–138 (MRTLMIHSDY…HPLSELSRTI (138 aa)) are editing domain. Positions 133–157 (ELSRTITTEPEEESEDSEEEPSEPS) are disordered. Residues 141–154 (EPEEESEDSEEEPS) show a composition bias toward acidic residues. The tract at residues 200-495 (PHVRLMREKE…TDKGNKPSLP (296 aa)) is catalytic. Zn(2+)-binding residues include cysteine 292, histidine 344, and histidine 466.

Belongs to the class-II aminoacyl-tRNA synthetase family. As to quaternary structure, homodimer. The cofactor is Zn(2+).

It localises to the cytoplasm. The enzyme catalyses tRNA(Thr) + L-threonine + ATP = L-threonyl-tRNA(Thr) + AMP + diphosphate + H(+). Catalyzes the attachment of threonine to tRNA(Thr) in a two-step reaction: L-threonine is first activated by ATP to form Thr-AMP and then transferred to the acceptor end of tRNA(Thr). Also edits incorrectly charged L-seryl-tRNA(Thr). The polypeptide is Threonine--tRNA ligase (Methanosphaera stadtmanae (strain ATCC 43021 / DSM 3091 / JCM 11832 / MCB-3)).